An 85-amino-acid chain; its full sequence is Large ribosomal subunit protein eL34 (85 aa).

It belongs to the eukaryotic ribosomal protein eL34 family.

The sequence is that of Large ribosomal subunit protein eL34 from Saccharolobus islandicus (strain Y.N.15.51 / Yellowstone #2) (Sulfolobus islandicus).